Here is a 657-residue protein sequence, read N- to C-terminus: Probable cobalt/nickel-exporting P-type ATPase (657 aa).

The next 5 membrane-spanning stretches (helical) occupy residues 40 to 60 (WATV…NGAP), 62 to 82 (AMWW…SAWA), 101 to 121 (AAVG…IVIF), 268 to 288 (LGMV…GADL), and 299 to 319 (MIVA…LSAI). Catalysis depends on Asp347, which acts as the 4-aspartylphosphate intermediate. Mg(2+) is bound by residues Asp543 and Asp547. The helical transmembrane segment at 596 to 618 (VVTVNLAIAATFIAVLVLWDLFG) threads the bilayer.

The protein belongs to the cation transport ATPase (P-type) (TC 3.A.3) family. Type IB subfamily.

It is found in the cell membrane. In terms of biological role, involved in heavy metal homeostasis. Probably exports nickel and cobalt ions out of the cell. In Mycobacterium bovis (strain ATCC BAA-935 / AF2122/97), this protein is Probable cobalt/nickel-exporting P-type ATPase (ctpD).